A 439-amino-acid polypeptide reads, in one-letter code: AP-2 complex subunit mu (439 aa).

The region spanning 172-438 (RNELYIDVVE…LTKAGTYQNR (267 aa)) is the MHD domain.

The protein belongs to the adaptor complexes medium subunit family. As to quaternary structure, adaptor protein complex 2 (AP-2) is a heterotetramer composed of two large adaptins (alpha-type and beta-type subunits), a medium adaptin (mu-type subunit AP50) and a small adaptin (sigma-type subunit AP17). In terms of processing, phosphorylated.

It is found in the cell membrane. The protein localises to the membrane. The protein resides in the coated pit. In terms of biological role, component of the adaptor complexes which link clathrin to receptors in coated vesicles. Clathrin-associated protein complexes are believed to interact with the cytoplasmic tails of membrane proteins, leading to their selection and concentration. AP50 is a subunit of the plasma membrane adaptor. The protein is AP-2 complex subunit mu (apm2) of Dictyostelium discoideum (Social amoeba).